A 187-amino-acid chain; its full sequence is Peptide deformylase (187 aa).

Fe cation-binding residues include C107 and H149. The active site involves E150. Residue H153 participates in Fe cation binding.

It belongs to the polypeptide deformylase family. The cofactor is Fe(2+).

It carries out the reaction N-terminal N-formyl-L-methionyl-[peptide] + H2O = N-terminal L-methionyl-[peptide] + formate. In terms of biological role, removes the formyl group from the N-terminal Met of newly synthesized proteins. Requires at least a dipeptide for an efficient rate of reaction. N-terminal L-methionine is a prerequisite for activity but the enzyme has broad specificity at other positions. The sequence is that of Peptide deformylase from Picosynechococcus sp. (strain ATCC 27264 / PCC 7002 / PR-6) (Agmenellum quadruplicatum).